The chain runs to 284 residues: L-fucose dehydrogenase (284 aa).

Positions 19, 21, 40, 41, 62, 63, 89, 154, 158, 187, 189, and 191 each coordinate NAD(+).

The protein belongs to the short-chain dehydrogenases/reductases (SDR) family.

The enzyme catalyses L-fucose + NAD(+) = L-fucono-1,5-lactone + NADH + H(+). It catalyses the reaction D-arabinose + NAD(+) = D-arabinono-1,5-lactone + NADH + H(+). It carries out the reaction L-galactose + NAD(+) = L-galactono-1,5-lactone + NADH + H(+). It functions in the pathway carbohydrate degradation; L-fucose degradation. Its function is as follows. Catalyzes the NAD(+)-dependent oxidation of L-fucose, yielding L-fucono-1,5-lactone, which rapidly converts spontaneously to L-fucone-1,4-lactone. Can also act on D-arabinose and L-galactose, with lower catalytic efficiency. Does not use NADPH. May be the initial enzyme of the putative L-fucose degradation pathway in mammals. The polypeptide is L-fucose dehydrogenase (HSD17B14) (Oryctolagus cuniculus (Rabbit)).